The following is a 224-amino-acid chain: Flagellar L-ring protein (224 aa).

The first 15 residues, 1–15 (MIKYIALASVVLLVG), serve as a signal peptide directing secretion. C16 carries N-palmitoyl cysteine lipidation. Residue C16 is the site of S-diacylglycerol cysteine attachment.

Belongs to the FlgH family. In terms of assembly, the basal body constitutes a major portion of the flagellar organelle and consists of four rings (L,P,S, and M) mounted on a central rod.

It is found in the cell outer membrane. The protein resides in the bacterial flagellum basal body. Functionally, assembles around the rod to form the L-ring and probably protects the motor/basal body from shearing forces during rotation. This is Flagellar L-ring protein from Shewanella frigidimarina (strain NCIMB 400).